Here is a 68-residue protein sequence, read N- to C-terminus: uncharacterized protein (68 aa).

This is an uncharacterized protein from Caenorhabditis elegans.